The following is a 130-amino-acid chain: Small ribosomal subunit protein uS9 (130 aa).

This sequence belongs to the universal ribosomal protein uS9 family.

The sequence is that of Small ribosomal subunit protein uS9 from Shigella sonnei (strain Ss046).